The chain runs to 330 residues: Olfactory receptor 5T9 (330 aa).

The Extracellular portion of the chain corresponds to 1–37 (MSIHSPGYTVRRIPVNNVTDTTMFILTGFTDDADLQV). Residue asparagine 17 is glycosylated (N-linked (GlcNAc...) asparagine). Residues 38–58 (LLFLLFFVIYLFTLIGNLGLV) traverse the membrane as a helical segment. The Cytoplasmic segment spans residues 59–66 (LLVIGDSR). A helical membrane pass occupies residues 67 to 87 (LHNPMYYFLSVLSFLDACYST). Topologically, residues 88 to 111 (VVTPKMLVNFISNDKSISYPGCVT) are extracellular. Cysteine 109 and cysteine 201 are joined by a disulfide. The helical transmembrane segment at 112–132 (EMFLFVTFGTTECFLLAAMAY) threads the bilayer. Over 133–145 (DRFVAIYNPLLYA) the chain is Cytoplasmic. The chain crosses the membrane as a helical span at residues 146–166 (VKMSPRVYIPLIIACYSGGIM). Topologically, residues 167-208 (HATIHTVATFSLSFCASNEIRHVFCDIPPLLAISCSNTNINQ) are extracellular. The chain crosses the membrane as a helical span at residues 209-229 (LLLFYCVGSIEIITILIVLVS). Residues 230–249 (YSFILFAILKMNSAEGRRKI) lie on the Cytoplasmic side of the membrane. The helical transmembrane segment at 250–270 (FSTCGSHLTGVSIYHGTILFM) threads the bilayer. At 271 to 283 (YVRPSSNYALEHD) the chain is on the extracellular side. The helical transmembrane segment at 284 to 304 (MIVSTFYTIVIPMLNPIIYSL) threads the bilayer. Residues 305 to 330 (RNKDVKEAMKKIFERNFFMNKVHFKL) are Cytoplasmic-facing.

It belongs to the G-protein coupled receptor 1 family.

The protein localises to the cell membrane. Potential odorant receptor. The chain is Olfactory receptor 5T9 from Mus musculus (Mouse).